Reading from the N-terminus, the 204-residue chain is Anthranilate synthase component 2 (204 aa).

The Glutamine amidotransferase type-1 domain maps to 13 to 204; sequence RVLVVDNYDS…KNFLEDPWTR (192 aa). 64–66 provides a ligand contact to L-glutamine; the sequence is GPC. Cys91 (nucleophile; for GATase activity) is an active-site residue. Residues Gln95 and 141-142 each bind L-glutamine; that span reads SL. Residues His181 and Glu183 each act as for GATase activity in the active site.

As to quaternary structure, heterotetramer consisting of two non-identical subunits: a beta subunit (TrpG) and a large alpha subunit (TrpE).

It catalyses the reaction chorismate + L-glutamine = anthranilate + pyruvate + L-glutamate + H(+). It functions in the pathway amino-acid biosynthesis; L-tryptophan biosynthesis; L-tryptophan from chorismate: step 1/5. Part of a heterotetrameric complex that catalyzes the two-step biosynthesis of anthranilate, an intermediate in the biosynthesis of L-tryptophan. In the first step, the glutamine-binding beta subunit (TrpG) of anthranilate synthase (AS) provides the glutamine amidotransferase activity which generates ammonia as a substrate that, along with chorismate, is used in the second step, catalyzed by the large alpha subunit of AS (TrpE) to produce anthranilate. In the absence of TrpG, TrpE can synthesize anthranilate directly from chorismate and high concentrations of ammonia. This is Anthranilate synthase component 2 (trpG) from Thermus thermophilus (strain ATCC 27634 / DSM 579 / HB8).